The primary structure comprises 163 residues: Type II secretion system protein M (163 aa).

Over 1-19 (MMDKLQGWWRSISAREQRL) the chain is Cytoplasmic. Residues 20–40 (VAVGGSCLLIGFCYWIVWQPI) traverse the membrane as a helical segment. The Periplasmic portion of the chain corresponds to 41–163 (ANRIAERERQ…VRRLQLSRPQ (123 aa)).

Belongs to the GSP M family. As to quaternary structure, type II secretion system is composed of four main components: the outer membrane complex, the inner membrane complex, the cytoplasmic secretion ATPase and the periplasm-spanning pseudopilus. Forms homodimers. Interacts with ExeL/GspL. Interacts with ExeE/GspE and ExeF/GspF.

The protein localises to the cell inner membrane. Its function is as follows. Inner membrane component of the type II secretion system required for the energy-dependent secretion of extracellular factors such as proteases and toxins from the periplasm. Plays a role in the complex assembly and recruits ExeL resulting in a stable complex in the inner membrane. Provides thus a link between the energy-providing ExeE protein in the cytoplasm and the rest of the T2SS machinery. The sequence is that of Type II secretion system protein M (exeM) from Aeromonas hydrophila.